Reading from the N-terminus, the 606-residue chain is NADH-ubiquinone oxidoreductase chain 5 (606 aa).

The residue at position 1 (Met1) is an N-formylmethionine. The next 15 helical transmembrane spans lie at 4–24, 43–63, 87–107, 117–137, 140–160, 171–191, 213–233, 241–261, 273–293, 310–330, 366–386, 413–433, 457–477, 482–502, and 582–602; these read FSSL…MMSF, AFIT…ELII, MMFI…SMWY, FFKY…ANNL, LFIG…WWYG, AILY…WFLT, LIGL…HPWL, TPVS…FLLI, IQSI…MCAL, LGLM…LHIC, MPFT…MPFL, LIAT…ALLG, LLIG…PTTI, MPYY…ILAL, and GLIK…MILF.

In terms of assembly, core subunit of respiratory chain NADH dehydrogenase (Complex I) which is composed of 45 different subunits.

The protein resides in the mitochondrion inner membrane. The catalysed reaction is a ubiquinone + NADH + 5 H(+)(in) = a ubiquinol + NAD(+) + 4 H(+)(out). Core subunit of the mitochondrial membrane respiratory chain NADH dehydrogenase (Complex I) which catalyzes electron transfer from NADH through the respiratory chain, using ubiquinone as an electron acceptor. Essential for the catalytic activity and assembly of complex I. The protein is NADH-ubiquinone oxidoreductase chain 5 (MT-ND5) of Bos taurus (Bovine).